The chain runs to 184 residues: Large ribosomal subunit protein uL6 (184 aa).

This sequence belongs to the universal ribosomal protein uL6 family. Part of the 50S ribosomal subunit.

In terms of biological role, this protein binds to the 23S rRNA, and is important in its secondary structure. It is located near the subunit interface in the base of the L7/L12 stalk, and near the tRNA binding site of the peptidyltransferase center. This is Large ribosomal subunit protein uL6 from Pseudothermotoga lettingae (strain ATCC BAA-301 / DSM 14385 / NBRC 107922 / TMO) (Thermotoga lettingae).